Reading from the N-terminus, the 746-residue chain is Quiannulatene synthase (746 aa).

Residues 1-336 (MASEVIVISD…SRYPTKTELN (336 aa)) are sesterterpenoid synthase. Asp95 serves as a coordination point for Mg(2+). The tract at residues 338-746 (PEVIIVDGEL…VELMLRRLWV (409 aa)) is geranylfarnesyl diphosphate synthase. Isopentenyl diphosphate is bound by residues Lys465, Arg468, and His497. Asp504 and Asp508 together coordinate Mg(2+). Position 513 (Arg513) interacts with dimethylallyl diphosphate. Arg514 serves as a coordination point for isopentenyl diphosphate. Positions 591, 592, 628, 635, and 645 each coordinate dimethylallyl diphosphate.

It in the N-terminal section; belongs to the terpene synthase family. The protein in the C-terminal section; belongs to the FPP/GGPP synthase family. Mg(2+) serves as cofactor.

The enzyme catalyses isopentenyl diphosphate + (2E,6E)-farnesyl diphosphate = (2E,6E,10E)-geranylgeranyl diphosphate + diphosphate. It catalyses the reaction (2E,6E,10E,14E)-geranylfarnesyl diphosphate = quiannulatene + diphosphate. Its pathway is secondary metabolite biosynthesis; terpenoid biosynthesis. Functionally, bifunctional sesterterpene synthase; part of the gene cluster that mediates the biosynthesis of the pentacyclic sesterterpene quiannulatic acid. The first step of the pathway is performed by the sesterterpene synthase (QS) that possesses both prenyl transferase and terpene cyclase activity, converting isopentenyl diphosphate and dimethylallyl diphosphate into geranylfarnesyl diphosphate (GFPP) and further converting GFPP into quiannulatene via an unprecedented cyclization mode which involves three rounds of hydride shifts and two successive C-C bond migrations to construct the 5-6-5-5-5 fused ring. The cytochrome P450 monooxygenase Qnn-P450 then oxidizes quiannulatene at C-19 in 3 successive reactions to afford quiannulatic acid. This chain is Quiannulatene synthase, found in Emericella variicolor (Aspergillus stellatus).